Here is a 234-residue protein sequence, read N- to C-terminus: Ubiquitin domain-containing protein 2 (234 aa).

The tract at residues 1-46 (MGGCVGAQHDSSGSLNENSDGTGVALGRNQPLKKEKPKWKSDYPMT) is disordered. Residues 9–21 (HDSSGSLNENSDG) show a composition bias toward polar residues. Residues 32 to 41 (LKKEKPKWKS) show a composition bias toward basic and acidic residues. Positions 152–227 (SQLRLRLSTG…VQVIVSQPVQ (76 aa)) constitute a Ubiquitin-like domain.

The protein resides in the cytoplasm. This Mus musculus (Mouse) protein is Ubiquitin domain-containing protein 2 (Ubtd2).